Here is a 273-residue protein sequence, read N- to C-terminus: Ribosomal RNA small subunit methyltransferase A (273 aa).

The S-adenosyl-L-methionine site is built by Asn-25, Leu-27, Gly-52, Glu-73, Asp-99, and Asn-118.

The protein belongs to the class I-like SAM-binding methyltransferase superfamily. rRNA adenine N(6)-methyltransferase family. RsmA subfamily.

Its subcellular location is the cytoplasm. It carries out the reaction adenosine(1518)/adenosine(1519) in 16S rRNA + 4 S-adenosyl-L-methionine = N(6)-dimethyladenosine(1518)/N(6)-dimethyladenosine(1519) in 16S rRNA + 4 S-adenosyl-L-homocysteine + 4 H(+). Its function is as follows. Specifically dimethylates two adjacent adenosines (A1518 and A1519) in the loop of a conserved hairpin near the 3'-end of 16S rRNA in the 30S particle. May play a critical role in biogenesis of 30S subunits. In Novosphingobium aromaticivorans (strain ATCC 700278 / DSM 12444 / CCUG 56034 / CIP 105152 / NBRC 16084 / F199), this protein is Ribosomal RNA small subunit methyltransferase A.